We begin with the raw amino-acid sequence, 279 residues long: Diaminopimelate epimerase (279 aa).

2 residues coordinate substrate: Asn-11 and Asn-63. The active-site Proton donor is the Cys-72. Substrate-binding positions include 73–74, Asn-161, Asn-194, and 212–213; these read GN and ER. The active-site Proton acceptor is Cys-221. Residue 222 to 223 coordinates substrate; sequence GT.

The protein belongs to the diaminopimelate epimerase family. Homodimer.

The protein resides in the cytoplasm. It carries out the reaction (2S,6S)-2,6-diaminopimelate = meso-2,6-diaminopimelate. It participates in amino-acid biosynthesis; L-lysine biosynthesis via DAP pathway; DL-2,6-diaminopimelate from LL-2,6-diaminopimelate: step 1/1. Its function is as follows. Catalyzes the stereoinversion of LL-2,6-diaminopimelate (L,L-DAP) to meso-diaminopimelate (meso-DAP), a precursor of L-lysine and an essential component of the bacterial peptidoglycan. In Moorella thermoacetica (strain ATCC 39073 / JCM 9320), this protein is Diaminopimelate epimerase.